Here is a 491-residue protein sequence, read N- to C-terminus: Angiopoietin-related protein 1 (491 aa).

The first 23 residues, 1 to 23 (MKAFIWTLSVLFFLLMGIGHGRG), serve as a signal peptide directing secretion. The stretch at 80-168 (ITRMDLENLK…LNVTTEMLKM (89 aa)) forms a coiled coil. Residues N160 and N188 are each glycosylated (N-linked (GlcNAc...) asparagine). Residues 271-491 (FINEGPYKDC…AVQMLIKPID (221 aa)) form the Fibrinogen C-terminal domain. Cystine bridges form between C280-C309 and C432-C445.

The protein resides in the secreted. This Bos taurus (Bovine) protein is Angiopoietin-related protein 1 (ANGPTL1).